A 320-amino-acid chain; its full sequence is Zona pellucida-binding protein 1 (320 aa).

N-linked (GlcNAc...) asparagine glycans are attached at residues N85 and N158.

Belongs to the zona pellucida-binding protein Sp38 family.

It is found in the cytoplasmic vesicle. The protein localises to the secretory vesicle. Its subcellular location is the acrosome. It localises to the secreted. The protein resides in the acrosome membrane. Functionally, plays a role in sperm morphogenesis and in sperm-oocyte interaction during fertilization. The sequence is that of Zona pellucida-binding protein 1 (ZPBP1) from Gallus gallus (Chicken).